The chain runs to 111 residues: DIVLTQSPASLAVSLGQRATISCKASQSVDYDGDSYMNWYQQKPGQPPKVLIFAASNLESGIPARFSGSGSGTDFTLNIHPVEEEDAATYYCQQSNEDPWTFGSGTKLEIK.

The interval 1 to 23 is framework-1; that stretch reads DIVLTQSPASLAVSLGQRATISC. A disulfide bridge links C23 with C92. A complementarity-determining-1 region spans residues 24–38; that stretch reads KASQSVDYDGDSYMN. Residues 39–53 are framework-2; it reads WYQQKPGQPPKVLIF. Residues 54-60 are complementarity-determining-2; that stretch reads AASNLES. Positions 61–92 are framework-3; sequence GIPARFSGSGSGTDFTLNIHPVEEEDAATYYC. The complementarity-determining-3 stretch occupies residues 93-101; the sequence is QQSNEDPWT. A framework-4 region spans residues 102-111; that stretch reads FGSGTKLEIK.

The protein is Ig kappa chain V-III region PC 7769 of Mus musculus (Mouse).